Here is a 562-residue protein sequence, read N- to C-terminus: Septation ring formation regulator EzrA (562 aa).

The Extracellular portion of the chain corresponds to 1-2 (ME). A helical transmembrane segment spans residues 3–21 (FVIGLLIVLLALFAAGYFF). At 22 to 562 (RKKIYAEIDR…VEKIKADISA (541 aa)) the chain is on the cytoplasmic side. Coiled coils occupy residues 377–425 (YSLL…LKKT) and 470–497 (MEEAGAHLKQAEDIVNRASRESEELVEQ).

This sequence belongs to the EzrA family. In terms of processing, may be degraded by FtsH protease.

The protein localises to the cell membrane. It is found in the membrane raft. Its function is as follows. Negative regulator of FtsZ ring formation; modulates the frequency and position of FtsZ ring formation. Inhibits FtsZ ring formation at polar sites. Interacts either with FtsZ or with one of its binding partners to promote depolymerization. The protein is Septation ring formation regulator EzrA of Bacillus subtilis (strain 168).